A 546-amino-acid chain; its full sequence is Chaperonin GroEL (546 aa).

ATP-binding positions include 30 to 33 (TLGP), lysine 51, 87 to 91 (DGTTT), glycine 415, 479 to 481 (NAA), and aspartate 495.

This sequence belongs to the chaperonin (HSP60) family. As to quaternary structure, forms a cylinder of 14 subunits composed of two heptameric rings stacked back-to-back. Interacts with the co-chaperonin GroES.

It is found in the cytoplasm. The enzyme catalyses ATP + H2O + a folded polypeptide = ADP + phosphate + an unfolded polypeptide.. Together with its co-chaperonin GroES, plays an essential role in assisting protein folding. The GroEL-GroES system forms a nano-cage that allows encapsulation of the non-native substrate proteins and provides a physical environment optimized to promote and accelerate protein folding. This Stutzerimonas stutzeri (strain A1501) (Pseudomonas stutzeri) protein is Chaperonin GroEL.